The following is a 105-amino-acid chain: Small ribosomal subunit protein uS14m (105 aa).

This sequence belongs to the universal ribosomal protein uS14 family. Component of the mitochondrial small ribosomal subunit (mt-SSU). Mature yeast 74S mitochondrial ribosomes consist of a small (37S) and a large (54S) subunit. The 37S small subunit contains a 15S ribosomal RNA (15S mt-rRNA) and at least 32 different proteins. The 54S large subunit contains a 21S rRNA (21S mt-rRNA) and at least 45 different proteins.

Its subcellular location is the mitochondrion. Functionally, component of the mitochondrial ribosome (mitoribosome), a dedicated translation machinery responsible for the synthesis of mitochondrial genome-encoded proteins, including at least some of the essential transmembrane subunits of the mitochondrial respiratory chain. The mitoribosomes are attached to the mitochondrial inner membrane and translation products are cotranslationally integrated into the membrane. This Schizosaccharomyces pombe (strain 972 / ATCC 24843) (Fission yeast) protein is Small ribosomal subunit protein uS14m (mrp2).